A 358-amino-acid polypeptide reads, in one-letter code: Acid phosphatase (358 aa).

An N-terminal signal peptide occupies residues 1–17 (MKFSTIALPLLASAALA). 3 N-linked (GlcNAc...) asparagine glycosylation sites follow: Asn20, Asn27, and Asn32. Residues 21–41 (SSHSGTNATSHNSTVPNENSK) are disordered. Asp49, Asp50, and Ser81 together coordinate Mg(2+). N-linked (GlcNAc...) asparagine glycosylation is found at Asn92 and Asn145. Asn156 lines the Mg(2+) pocket. Ser189 is a catalytic residue. N-linked (GlcNAc...) asparagine glycans are attached at residues Asn199 and Asn278.

The protein belongs to the SurE nucleotidase family. Requires Mg(2+) as cofactor.

Its subcellular location is the secreted. The enzyme catalyses a phosphate monoester + H2O = an alcohol + phosphate. Its function is as follows. Probably serves to scavenge phosphorus for growing cells. This chain is Acid phosphatase (PHO2), found in Yarrowia lipolytica (strain CLIB 122 / E 150) (Yeast).